Reading from the N-terminus, the 1446-residue chain is Sister chromatid cohesion protein PDS5 homolog B (1446 aa).

An HEAT repeat occupies 383–419 (LLVNDHLLNFVRERTLDKRWRVRKEAMMGLAQIYKKY). Lys-1136 bears the N6-acetyllysine mark. Over residues 1137 to 1155 (PLSSAGKQSQTKSSRMETV) the composition is skewed to polar residues. The disordered stretch occupies residues 1137–1446 (PLSSAGKQSQ…RRRSSKRERR (310 aa)). Residues Ser-1140, Ser-1162, Ser-1166, Ser-1176, Ser-1182, and Ser-1191 each carry the phosphoserine modification. Over residues 1156 to 1167 (SNASSSSNPSSP) the composition is skewed to low complexity. The span at 1172–1184 (GRLDSSEMDHSEN) shows a compositional bias: basic and acidic residues. Basic and acidic residues-rich tracts occupy residues 1196-1212 (KKSD…LEKP) and 1223-1241 (PEEK…EQKP). The segment covering 1243 to 1252 (GSQRGRKRGR) has biased composition (basic residues). Positions 1247-1259 (GRKRGRTASDSDE) form a DNA-binding region, a.T hook 1. Thr-1253 carries the phosphothreonine modification. A phosphoserine mark is found at Ser-1255 and Ser-1257. The span at 1263–1272 (PEEKRHKEEL) shows a compositional bias: basic and acidic residues. At Ser-1281 the chain carries Phosphoserine. Positions 1285–1297 (KGKRGRPPKPLGG) form a DNA-binding region, a.T hook 2. Composition is skewed to basic residues over residues 1308 to 1317 (TSKKGNKKKL) and 1339 to 1351 (SKSK…KRAQ). Polar residues predominate over residues 1353–1370 (RAESPETSAVESTQSTPQ). Phosphoserine is present on residues Ser-1356 and Ser-1364. The residue at position 1365 (Thr-1365) is a Phosphothreonine. Ser-1367 is modified (phosphoserine). Thr-1368 is subject to Phosphothreonine. Positions 1370-1382 (QKGRGRPSKAPSP) form a DNA-binding region, a.T hook 3. Ser-1381, Ser-1415, and Ser-1418 each carry phosphoserine. Acidic residues predominate over residues 1421-1431 (TTQEGAEEEDI). The span at 1436-1446 (VRRRSSKRERR) shows a compositional bias: basic residues.

The protein belongs to the PDS5 family. In terms of assembly, interacts with the cohesin complex. Interacts with RAD21; the interaction is direct. Interacts with WAPL (via FGF motifs) or CDCA5 (via the FGF motif); the interaction is direct, cohesin-dependent and competitive. Expressed in prostate.

Its subcellular location is the nucleus. Functionally, regulator of sister chromatid cohesion in mitosis which may stabilize cohesin complex association with chromatin. May couple sister chromatid cohesion during mitosis to DNA replication. Cohesion ensures that chromosome partitioning is accurate in both meiotic and mitotic cells and plays an important role in DNA repair. Plays a role in androgen-induced proliferative arrest in prostate cells. The chain is Sister chromatid cohesion protein PDS5 homolog B (Pds5b) from Mus musculus (Mouse).